The primary structure comprises 206 residues: MSNESIKAEQDLIHEGVESEVSTEEASLIDELTQANFRIEELEQLLADALAKVDEQKDSVIRAAAEVDNIRRRAAMDVEKANKFALEKFANELLPVLDNMERALQGTNPQDETTKAIYEGVELTQKSLLTAVAKFGVKQIDPQGQAFNPDQHQAIGMQPSAEFPTNTVMLVMQKGYELNSRLLRPAMVMVSQGGPSQESASIDIEA.

Residues 1–17 (MSNESIKAEQDLIHEGV) show a composition bias toward basic and acidic residues. The tract at residues 1 to 20 (MSNESIKAEQDLIHEGVESE) is disordered.

Belongs to the GrpE family. In terms of assembly, homodimer.

The protein resides in the cytoplasm. Functionally, participates actively in the response to hyperosmotic and heat shock by preventing the aggregation of stress-denatured proteins, in association with DnaK and GrpE. It is the nucleotide exchange factor for DnaK and may function as a thermosensor. Unfolded proteins bind initially to DnaJ; upon interaction with the DnaJ-bound protein, DnaK hydrolyzes its bound ATP, resulting in the formation of a stable complex. GrpE releases ADP from DnaK; ATP binding to DnaK triggers the release of the substrate protein, thus completing the reaction cycle. Several rounds of ATP-dependent interactions between DnaJ, DnaK and GrpE are required for fully efficient folding. This is Protein GrpE from Shewanella oneidensis (strain ATCC 700550 / JCM 31522 / CIP 106686 / LMG 19005 / NCIMB 14063 / MR-1).